The primary structure comprises 371 residues: Queuine tRNA-ribosyltransferase (371 aa).

Asp-90 acts as the Proton acceptor in catalysis. Substrate-binding positions include 90 to 94, Asp-144, Gln-189, and Gly-215; that span reads DSGGF. The interval 246 to 252 is RNA binding; the sequence is GVGTPEN. Catalysis depends on Asp-265, which acts as the Nucleophile. The segment at 270 to 274 is RNA binding; important for wobble base 34 recognition; sequence TRNAR. The Zn(2+) site is built by Cys-303, Cys-305, Cys-308, and His-334.

Belongs to the queuine tRNA-ribosyltransferase family. Homodimer. Within each dimer, one monomer is responsible for RNA recognition and catalysis, while the other monomer binds to the replacement base PreQ1. The cofactor is Zn(2+).

The catalysed reaction is 7-aminomethyl-7-carbaguanine + guanosine(34) in tRNA = 7-aminomethyl-7-carbaguanosine(34) in tRNA + guanine. Its pathway is tRNA modification; tRNA-queuosine biosynthesis. In terms of biological role, catalyzes the base-exchange of a guanine (G) residue with the queuine precursor 7-aminomethyl-7-deazaguanine (PreQ1) at position 34 (anticodon wobble position) in tRNAs with GU(N) anticodons (tRNA-Asp, -Asn, -His and -Tyr). Catalysis occurs through a double-displacement mechanism. The nucleophile active site attacks the C1' of nucleotide 34 to detach the guanine base from the RNA, forming a covalent enzyme-RNA intermediate. The proton acceptor active site deprotonates the incoming PreQ1, allowing a nucleophilic attack on the C1' of the ribose to form the product. After dissociation, two additional enzymatic reactions on the tRNA convert PreQ1 to queuine (Q), resulting in the hypermodified nucleoside queuosine (7-(((4,5-cis-dihydroxy-2-cyclopenten-1-yl)amino)methyl)-7-deazaguanosine). This is Queuine tRNA-ribosyltransferase from Helicobacter pylori (strain Shi470).